A 1435-amino-acid chain; its full sequence is Gag-Pol polyprotein (1435 aa).

Glycine 2 is lipidated: N-myristoyl glycine; by host. An interaction with Gp41 region spans residues 7–31 (VLSGGELDRWEKIRLRPGGKKKYKL). The segment at 8–43 (LSGGELDRWEKIRLRPGGKKKYKLKHIVWASRELER) is interaction with host CALM1. The interaction with host AP3D1 stretch occupies residues 12-19 (ELDRWEKI). The interaction with membrane phosphatidylinositol 4,5-bisphosphate and RNA stretch occupies residues 14–33 (DRWEKIRLRPGGKKKYKLKH). Positions 16-22 (WEKIRLR) match the Nuclear export signal motif. Residues 26 to 32 (KKKYKLK) carry the Nuclear localization signal motif. The tract at residues 73–77 (EELKS) is interaction with membrane phosphatidylinositol 4,5-bisphosphate. The disordered stretch occupies residues 106-127 (EEQNKSKKKAQQAAADTGNSSQ). A Phosphotyrosine; by host modification is found at tyrosine 132. An interaction with human PPIA/CYPA and NUP153 region spans residues 189–227 (NTVGGHQAAMQMLKETINEEAAEWDRLHPVQAGPVAPGQ). The dimerization/Multimerization of capsid protein p24 stretch occupies residues 277 to 363 (YSPSSILDIK…GGPGHKARVL (87 aa)). 2 CCHC-type zinc fingers span residues 390–407 (VKCF…NCRA) and 411–428 (KGCW…DCTE). A dimerization of protease region spans residues 489-493 (PQITL). The Peptidase A2 domain occupies 508-577 (KEALLDTGAD…TPVNIIGRNL (70 aa)). The For protease activity; shared with dimeric partner role is filled by aspartate 513. Dimerization of protease stretches follow at residues 537–543 (GIGGFIK) and 576–588 (NLLT…LNFP). The Reverse transcriptase domain maps to 631–821 (EGKISKIGPE…PPFLWMGYEL (191 aa)). Residues aspartate 697, aspartate 772, and aspartate 773 each coordinate Mg(2+). An RT 'primer grip' region spans residues 814–822 (FLWMGYELH). Positions 985 to 1001 (WEAWWTDYWQATWIPEW) match the Tryptophan repeat motif motif. Residues 1021-1144 (IVGAETFYVD…VDKLVSAGIR (124 aa)) form the RNase H type-1 domain. Mg(2+)-binding residues include aspartate 1030, glutamate 1065, aspartate 1085, and aspartate 1136. The Integrase-type zinc-finger motif lies at 1150-1191 (DGIDKAQEEHEKYHTNWRAMASDFNLPPVVAKEIVASCNKCQ). Zn(2+)-binding residues include histidine 1159, histidine 1163, cysteine 1187, and cysteine 1190. The Integrase catalytic domain maps to 1201-1351 (VDCSPGIWQL…SAGERIVDII (151 aa)). Residues aspartate 1211, aspartate 1263, and glutamate 1299 each coordinate Mg(2+). The segment at residues 1370–1417 (FRVYYRDSRDPLWKGPAKLLWKGEGAVVIQDNSDIKVVPRRKAKIIRD) is a DNA-binding region (integrase-type).

Homotrimer; further assembles as hexamers of trimers. Interacts with gp41 (via C-terminus). Interacts with host CALM1; this interaction induces a conformational change in the Matrix protein, triggering exposure of the myristate group. Interacts with host AP3D1; this interaction allows the polyprotein trafficking to multivesicular bodies during virus assembly. Part of the pre-integration complex (PIC) which is composed of viral genome, matrix protein, Vpr and integrase. In terms of assembly, homodimer; the homodimer further multimerizes as homohexamers or homopentamers. Interacts with human PPIA/CYPA; This interaction stabilizes the capsid. Interacts with human NUP153. Interacts with host PDZD8; this interaction stabilizes the capsid. Interacts with monkey TRIM5; this interaction destabilizes the capsid. As to quaternary structure, homodimer, whose active site consists of two apposed aspartic acid residues. Heterodimer of p66 RT and p51 RT (RT p66/p51). Heterodimerization of RT is essential for DNA polymerase activity. The overall folding of the subdomains is similar in p66 RT and p51 RT but the spatial arrangements of the subdomains are dramatically different. In terms of assembly, homotetramer; may further associate as a homohexadecamer. Part of the pre-integration complex (PIC) which is composed of viral genome, matrix protein, Vpr and integrase. Interacts with human SMARCB1/INI1 and human PSIP1/LEDGF isoform 1. Interacts with human KPNA3; this interaction might play a role in nuclear import of the pre-integration complex. Interacts with human NUP153; this interaction might play a role in nuclear import of the pre-integration complex. Mg(2+) serves as cofactor. In terms of processing, specific enzymatic cleavages by the viral protease yield mature proteins. The protease is released by autocatalytic cleavage. The polyprotein is cleaved during and after budding, this process is termed maturation. Proteolytic cleavage of p66 RT removes the RNase H domain to yield the p51 RT subunit. Nucleocapsid protein p7 might be further cleaved after virus entry. Post-translationally, tyrosine phosphorylated presumably in the virion by a host kinase. Phosphorylation is apparently not a major regulator of membrane association. Phosphorylated possibly by host MAPK1; this phosphorylation is necessary for Pin1-mediated virion uncoating. In terms of processing, methylated by host PRMT6, impairing its function by reducing RNA annealing and the initiation of reverse transcription.

Its subcellular location is the host cell membrane. It is found in the host endosome. The protein resides in the host multivesicular body. It localises to the virion membrane. The protein localises to the host nucleus. Its subcellular location is the host cytoplasm. It is found in the virion. The catalysed reaction is Specific for a P1 residue that is hydrophobic, and P1' variable, but often Pro.. The enzyme catalyses Endohydrolysis of RNA in RNA/DNA hybrids. Three different cleavage modes: 1. sequence-specific internal cleavage of RNA. Human immunodeficiency virus type 1 and Moloney murine leukemia virus enzymes prefer to cleave the RNA strand one nucleotide away from the RNA-DNA junction. 2. RNA 5'-end directed cleavage 13-19 nucleotides from the RNA end. 3. DNA 3'-end directed cleavage 15-20 nucleotides away from the primer terminus.. It carries out the reaction 3'-end directed exonucleolytic cleavage of viral RNA-DNA hybrid.. It catalyses the reaction DNA(n) + a 2'-deoxyribonucleoside 5'-triphosphate = DNA(n+1) + diphosphate. Its activity is regulated as follows. Protease: The viral protease is inhibited by many synthetic protease inhibitors (PIs), such as amprenavir, atazanavir, indinavir, loprinavir, nelfinavir, ritonavir and saquinavir. Use of protease inhibitors in tritherapy regimens permit more ambitious therapeutic strategies. Reverse transcriptase/ribonuclease H: RT can be inhibited either by nucleoside RT inhibitors (NRTIs) or by non nucleoside RT inhibitors (NNRTIs). NRTIs act as chain terminators, whereas NNRTIs inhibit DNA polymerization by binding a small hydrophobic pocket near the RT active site and inducing an allosteric change in this region. Classical NRTIs are abacavir, adefovir (PMEA), didanosine (ddI), lamivudine (3TC), stavudine (d4T), tenofovir (PMPA), zalcitabine (ddC), and zidovudine (AZT). Classical NNRTIs are atevirdine (BHAP U-87201E), delavirdine, efavirenz (DMP-266), emivirine (I-EBU), and nevirapine (BI-RG-587). The tritherapies used as a basic effective treatment of AIDS associate two NRTIs and one NNRTI. Its function is as follows. Mediates, with Gag polyprotein, the essential events in virion assembly, including binding the plasma membrane, making the protein-protein interactions necessary to create spherical particles, recruiting the viral Env proteins, and packaging the genomic RNA via direct interactions with the RNA packaging sequence (Psi). Gag-Pol polyprotein may regulate its own translation, by the binding genomic RNA in the 5'-UTR. At low concentration, the polyprotein would promote translation, whereas at high concentration, the polyprotein would encapsidate genomic RNA and then shut off translation. In terms of biological role, targets the polyprotein to the plasma membrane via a multipartite membrane-binding signal, that includes its myristoylated N-terminus. Matrix protein is part of the pre-integration complex. Implicated in the release from host cell mediated by Vpu. Binds to RNA. Forms the conical core that encapsulates the genomic RNA-nucleocapsid complex in the virion. Most core are conical, with only 7% tubular. The core is constituted by capsid protein hexamer subunits. The core is disassembled soon after virion entry. Host restriction factors such as TRIM5-alpha or TRIMCyp bind retroviral capsids and cause premature capsid disassembly, leading to blocks in reverse transcription. Capsid restriction by TRIM5 is one of the factors which restricts HIV-1 to the human species. Host PIN1 apparently facilitates the virion uncoating. On the other hand, interactions with PDZD8 or CYPA stabilize the capsid. Functionally, encapsulates and protects viral dimeric unspliced genomic RNA (gRNA). Binds these RNAs through its zinc fingers. Acts as a nucleic acid chaperone which is involved in rearangement of nucleic acid secondary structure during gRNA retrotranscription. Also facilitates template switch leading to recombination. As part of the polyprotein, participates in gRNA dimerization, packaging, tRNA incorporation and virion assembly. Its function is as follows. Aspartyl protease that mediates proteolytic cleavages of Gag and Gag-Pol polyproteins during or shortly after the release of the virion from the plasma membrane. Cleavages take place as an ordered, step-wise cascade to yield mature proteins. This process is called maturation. Displays maximal activity during the budding process just prior to particle release from the cell. Also cleaves Nef and Vif, probably concomitantly with viral structural proteins on maturation of virus particles. Hydrolyzes host EIF4GI and PABP1 in order to shut off the capped cellular mRNA translation. The resulting inhibition of cellular protein synthesis serves to ensure maximal viral gene expression and to evade host immune response. Also mediates cleavage of host YTHDF3. Mediates cleavage of host CARD8, thereby activating the CARD8 inflammasome, leading to the clearance of latent HIV-1 in patient CD4(+) T-cells after viral reactivation; in contrast, HIV-1 can evade CARD8-sensing when its protease remains inactive in infected cells prior to viral budding. In terms of biological role, multifunctional enzyme that converts the viral RNA genome into dsDNA in the cytoplasm, shortly after virus entry into the cell. This enzyme displays a DNA polymerase activity that can copy either DNA or RNA templates, and a ribonuclease H (RNase H) activity that cleaves the RNA strand of RNA-DNA heteroduplexes in a partially processive 3' to 5' endonucleasic mode. Conversion of viral genomic RNA into dsDNA requires many steps. A tRNA(3)-Lys binds to the primer-binding site (PBS) situated at the 5'-end of the viral RNA. RT uses the 3' end of the tRNA primer to perform a short round of RNA-dependent minus-strand DNA synthesis. The reading proceeds through the U5 region and ends after the repeated (R) region which is present at both ends of viral RNA. The portion of the RNA-DNA heteroduplex is digested by the RNase H, resulting in a ssDNA product attached to the tRNA primer. This ssDNA/tRNA hybridizes with the identical R region situated at the 3' end of viral RNA. This template exchange, known as minus-strand DNA strong stop transfer, can be either intra- or intermolecular. RT uses the 3' end of this newly synthesized short ssDNA to perform the RNA-dependent minus-strand DNA synthesis of the whole template. RNase H digests the RNA template except for two polypurine tracts (PPTs) situated at the 5'-end and near the center of the genome. It is not clear if both polymerase and RNase H activities are simultaneous. RNase H probably can proceed both in a polymerase-dependent (RNA cut into small fragments by the same RT performing DNA synthesis) and a polymerase-independent mode (cleavage of remaining RNA fragments by free RTs). Secondly, RT performs DNA-directed plus-strand DNA synthesis using the PPTs that have not been removed by RNase H as primers. PPTs and tRNA primers are then removed by RNase H. The 3' and 5' ssDNA PBS regions hybridize to form a circular dsDNA intermediate. Strand displacement synthesis by RT to the PBS and PPT ends produces a blunt ended, linear dsDNA copy of the viral genome that includes long terminal repeats (LTRs) at both ends. Catalyzes viral DNA integration into the host chromosome, by performing a series of DNA cutting and joining reactions. This enzyme activity takes place after virion entry into a cell and reverse transcription of the RNA genome in dsDNA. The first step in the integration process is 3' processing. This step requires a complex comprising the viral genome, matrix protein, Vpr and integrase. This complex is called the pre-integration complex (PIC). The integrase protein removes 2 nucleotides from each 3' end of the viral DNA, leaving recessed CA OH's at the 3' ends. In the second step, the PIC enters cell nucleus. This process is mediated through integrase and Vpr proteins, and allows the virus to infect a non dividing cell. This ability to enter the nucleus is specific of lentiviruses, other retroviruses cannot and rely on cell division to access cell chromosomes. In the third step, termed strand transfer, the integrase protein joins the previously processed 3' ends to the 5' ends of strands of target cellular DNA at the site of integration. The 5'-ends are produced by integrase-catalyzed staggered cuts, 5 bp apart. A Y-shaped, gapped, recombination intermediate results, with the 5'-ends of the viral DNA strands and the 3' ends of target DNA strands remaining unjoined, flanking a gap of 5 bp. The last step is viral DNA integration into host chromosome. This involves host DNA repair synthesis in which the 5 bp gaps between the unjoined strands are filled in and then ligated. Since this process occurs at both cuts flanking the HIV genome, a 5 bp duplication of host DNA is produced at the ends of HIV-1 integration. Alternatively, Integrase may catalyze the excision of viral DNA just after strand transfer, this is termed disintegration. This Human immunodeficiency virus type 1 group M subtype B (strain 89.6) (HIV-1) protein is Gag-Pol polyprotein (gag-pol).